The chain runs to 209 residues: Scoloptoxin SSD346 (209 aa).

An N-terminal signal peptide occupies residues 1 to 22 (NILLSSTLFVLLMFQIIGSGLG).

Post-translationally, contains 2 disulfide bonds. In terms of tissue distribution, expressed by the venom gland.

It is found in the secreted. May act as a voltage-gated calcium channel inhibitor. The sequence is that of Scoloptoxin SSD346 from Scolopendra dehaani (Thai centipede).